The following is a 540-amino-acid chain: Ecdysone 20-monooxygenase (540 aa).

Cys488 contacts heme.

This sequence belongs to the cytochrome P450 family. Heme is required as a cofactor. Strong expression by embryonic stage 10 in epidermis, decreases significantly in older embryos. Third instar larvae show expression in the midgut copper cells, Malpighian tubules and fat body. In the adult ovaries, expression is seen in both nurse cells and centripetally migrating follicle cells.

The protein localises to the mitochondrion membrane. It catalyses the reaction ecdysone + AH2 + O2 = 20-hydroxyecdysone + A + H2O. It functions in the pathway steroid biosynthesis; ecdysteroid biosynthesis. Required for CNS development; midline glial cells. Involved in the metabolism of insect hormones; responsible for all ecdysone 20-monooxygenase activity during embryonic, larval and adult stages. May be involved in the breakdown of synthetic insecticides. The protein is Ecdysone 20-monooxygenase (shd) of Drosophila melanogaster (Fruit fly).